We begin with the raw amino-acid sequence, 75 residues long: Exodeoxyribonuclease 7 small subunit (75 aa).

Belongs to the XseB family. Heterooligomer composed of large and small subunits.

The protein localises to the cytoplasm. It catalyses the reaction Exonucleolytic cleavage in either 5'- to 3'- or 3'- to 5'-direction to yield nucleoside 5'-phosphates.. Functionally, bidirectionally degrades single-stranded DNA into large acid-insoluble oligonucleotides, which are then degraded further into small acid-soluble oligonucleotides. The chain is Exodeoxyribonuclease 7 small subunit from Chlamydia caviae (strain ATCC VR-813 / DSM 19441 / 03DC25 / GPIC) (Chlamydophila caviae).